The primary structure comprises 46 residues: uncharacterized protein (46 aa).

This is an uncharacterized protein from Bacillus subtilis (strain 168).